Here is a 118-residue protein sequence, read N- to C-terminus: Large ribosomal subunit protein bL19 (118 aa).

It belongs to the bacterial ribosomal protein bL19 family.

Functionally, this protein is located at the 30S-50S ribosomal subunit interface and may play a role in the structure and function of the aminoacyl-tRNA binding site. The protein is Large ribosomal subunit protein bL19 of Metamycoplasma arthritidis (strain 158L3-1) (Mycoplasma arthritidis).